Reading from the N-terminus, the 425-residue chain is Rho GTPase-activating protein 8 (425 aa).

Residues 13 to 168 (PFYDVARHGI…EVVRYDEKLQ (156 aa)) form the CRAL-TRIO domain. The tract at residues 169–192 (NLHKGQPPPPTKTPPPRPPLPTQQ) is disordered. Positions 174 to 189 (QPPPPTKTPPPRPPLP) are enriched in pro residues. Residues 195 to 381 (VSLQYLRDKN…LLIEYYDKVF (187 aa)) form the Rho-GAP domain.

Highly expressed in skeletal muscle, lung and testis, and at lower levels in kidney, stomach and colon. Not detected in heart, liver, spleen, breast, brain, neonatal head or pancreas.

In terms of biological role, GTPase activator for the Rho-type GTPases by converting them to an inactive GDP-bound state. This Mus musculus (Mouse) protein is Rho GTPase-activating protein 8 (Arhgap8).